The sequence spans 430 residues: Adenylosuccinate synthetase (430 aa).

GTP contacts are provided by residues 12–18 (GDEGKGK) and 40–42 (GHT). Aspartate 13 acts as the Proton acceptor in catalysis. Mg(2+) is bound by residues aspartate 13 and glycine 40. IMP is bound by residues 13 to 16 (DEGK), 38 to 41 (NAGH), threonine 128, arginine 142, glutamine 223, threonine 238, and arginine 302. Histidine 41 serves as the catalytic Proton donor. Residues 330 to 332 (SID) and 412 to 414 (SVG) each bind GTP.

This sequence belongs to the adenylosuccinate synthetase family. In terms of assembly, homodimer. The cofactor is Mg(2+).

Its subcellular location is the cytoplasm. The enzyme catalyses IMP + L-aspartate + GTP = N(6)-(1,2-dicarboxyethyl)-AMP + GDP + phosphate + 2 H(+). Its pathway is purine metabolism; AMP biosynthesis via de novo pathway; AMP from IMP: step 1/2. Functionally, plays an important role in the de novo pathway of purine nucleotide biosynthesis. Catalyzes the first committed step in the biosynthesis of AMP from IMP. This chain is Adenylosuccinate synthetase, found in Bacillus subtilis (strain 168).